The sequence spans 229 residues: Lipoprotein-releasing system ATP-binding protein LolD 1 (229 aa).

An ABC transporter domain is found at 2-229; the sequence is LVVSELSKSY…VRRGRFGITA (228 aa). An ATP-binding site is contributed by 38–45; that stretch reads GPSGSGKT.

The protein belongs to the ABC transporter superfamily. Lipoprotein translocase (TC 3.A.1.125) family. In terms of assembly, the complex is composed of two ATP-binding proteins (LolD) and two transmembrane proteins (LolC and LolE).

It is found in the cell inner membrane. Functionally, part of the ABC transporter complex LolCDE involved in the translocation of mature outer membrane-directed lipoproteins, from the inner membrane to the periplasmic chaperone, LolA. Responsible for the formation of the LolA-lipoprotein complex in an ATP-dependent manner. The polypeptide is Lipoprotein-releasing system ATP-binding protein LolD 1 (Rhodopirellula baltica (strain DSM 10527 / NCIMB 13988 / SH1)).